Consider the following 204-residue polypeptide: IMPACT family member YigZ (204 aa).

Belongs to the IMPACT family. In terms of assembly, monomer.

The protein is IMPACT family member YigZ (yigZ) of Escherichia coli (strain K12).